The following is a 584-amino-acid chain: Arginine--tRNA ligase (584 aa).

The short motif at Pro-127 to His-137 is the 'HIGH' region element.

Belongs to the class-I aminoacyl-tRNA synthetase family. In terms of assembly, monomer.

The protein localises to the cytoplasm. It catalyses the reaction tRNA(Arg) + L-arginine + ATP = L-arginyl-tRNA(Arg) + AMP + diphosphate. This Borrelia turicatae (strain 91E135) protein is Arginine--tRNA ligase.